Consider the following 839-residue polypeptide: Periplasmic nitrate reductase (839 aa).

A signal peptide (tat-type signal) is located at residues 1–34 (MTLTRRDFIKANAAAAAATAAAVNLPLVPSMAQA). In terms of domain architecture, 4Fe-4S Mo/W bis-MGD-type spans 46–102 (IKWDKAACRFCGTGCSVLVGTKGGRVVATQGDPDAPVNRGLNCIKGYFLSKIMYGED). The [4Fe-4S] cluster site is built by Cys-53, Cys-56, Cys-60, and Cys-88. Residues Lys-90, Gln-157, Asn-182, Cys-186, 219–226 (WGSNMAEM), 250–254 (STYEH), 269–271 (QTD), Met-379, Gln-383, Asn-489, 515–516 (SD), Lys-538, Asp-565, and 729–738 (TGRVLEHWHT) contribute to the Mo-bis(molybdopterin guanine dinucleotide) site. Phe-805 lines the substrate pocket. Mo-bis(molybdopterin guanine dinucleotide) contacts are provided by Asn-813 and Lys-830.

Belongs to the prokaryotic molybdopterin-containing oxidoreductase family. NasA/NapA/NarB subfamily. As to quaternary structure, component of the periplasmic nitrate reductase NapAB complex composed of NapA and NapB. It depends on [4Fe-4S] cluster as a cofactor. Requires Mo-bis(molybdopterin guanine dinucleotide) as cofactor. Post-translationally, predicted to be exported by the Tat system. The position of the signal peptide cleavage has not been experimentally proven.

The protein localises to the periplasm. It catalyses the reaction 2 Fe(II)-[cytochrome] + nitrate + 2 H(+) = 2 Fe(III)-[cytochrome] + nitrite + H2O. Catalytic subunit of the periplasmic nitrate reductase complex NapAB. Receives electrons from NapB and catalyzes the reduction of nitrate to nitrite. The chain is Periplasmic nitrate reductase from Laribacter hongkongensis (strain HLHK9).